Here is a 444-residue protein sequence, read N- to C-terminus: Type VII secretion system protein EssB (444 aa).

At 1-229 (MVKNHNPKNE…RKVGHTVFKW (229 aa)) the chain is on the cytoplasmic side. Residues 230 to 250 (VAIGMTTLSVLLIAFLAFLYF) form a helical membrane-spanning segment. The Extracellular portion of the chain corresponds to 251–444 (SVMKHNERIE…EKRQEAERKK (194 aa)). Residues 366-444 (KNNGDLSNDK…EKRQEAERKK (79 aa)) form a disordered region. Basic and acidic residues predominate over residues 372-444 (SNDKRSEETK…EKRQEAERKK (73 aa)). The stretch at 387-443 (LQDILDKEKQVKDEKAKSEEEKAKAKDEKLKQQEENEKKQKEQAQKDKEKRQEAERK) forms a coiled coil.

It belongs to the EssB family. May oligomerize and interact with other membrane components to form the Ess system. Interacts with EsaA.

It is found in the cell membrane. Its function is as follows. Component of the type VII secretion system (Ess). Required for the secretion of EsxA and proper accumulation of EssB and EssD. The protein is Type VII secretion system protein EssB of Staphylococcus aureus (strain USA300).